A 434-amino-acid polypeptide reads, in one-letter code: Protein trichome birefringence-like 3 (434 aa).

Residues 15-35 (IPLSIIVLVLCGFMFFILLYT) traverse the membrane as a helical; Signal-anchor for type II membrane protein segment. The GDS motif signature appears at 166–168 (GDS). Positions 413-427 (DCIHWCLPGLPDTWN) match the DCXHWCLPGXXDXWN motif motif.

This sequence belongs to the PC-esterase family. TBL subfamily.

The protein localises to the golgi apparatus membrane. Its function is as follows. Involved in secondary cell wall cellulose deposition. Required for normal stem development. May act as a bridging protein that binds pectin and other cell wall polysaccharides. Probably involved in maintaining esterification of pectins. May be involved in the specific O-acetylation of cell wall polymers. The sequence is that of Protein trichome birefringence-like 3 (TBL3) from Arabidopsis thaliana (Mouse-ear cress).